The primary structure comprises 87 residues: Small ribosomal subunit protein uS15 (87 aa).

It belongs to the universal ribosomal protein uS15 family. In terms of assembly, part of the 30S ribosomal subunit. Forms a bridge to the 50S subunit in the 70S ribosome, contacting the 23S rRNA.

One of the primary rRNA binding proteins, it binds directly to 16S rRNA where it helps nucleate assembly of the platform of the 30S subunit by binding and bridging several RNA helices of the 16S rRNA. In terms of biological role, forms an intersubunit bridge (bridge B4) with the 23S rRNA of the 50S subunit in the ribosome. The chain is Small ribosomal subunit protein uS15 from Clostridium acetobutylicum (strain ATCC 824 / DSM 792 / JCM 1419 / IAM 19013 / LMG 5710 / NBRC 13948 / NRRL B-527 / VKM B-1787 / 2291 / W).